Reading from the N-terminus, the 1036-residue chain is Isoleucine--tRNA ligase (1036 aa).

Residues 46-56 (PFATGLPHYGH) carry the 'HIGH' region motif. A 'KMSKS' region motif is present at residues 589-593 (KMSKR). K592 contributes to the ATP binding site.

It belongs to the class-I aminoacyl-tRNA synthetase family. IleS type 2 subfamily. In terms of assembly, monomer. The cofactor is Zn(2+).

The protein resides in the cytoplasm. It catalyses the reaction tRNA(Ile) + L-isoleucine + ATP = L-isoleucyl-tRNA(Ile) + AMP + diphosphate. Functionally, catalyzes the attachment of isoleucine to tRNA(Ile). As IleRS can inadvertently accommodate and process structurally similar amino acids such as valine, to avoid such errors it has two additional distinct tRNA(Ile)-dependent editing activities. One activity is designated as 'pretransfer' editing and involves the hydrolysis of activated Val-AMP. The other activity is designated 'posttransfer' editing and involves deacylation of mischarged Val-tRNA(Ile). The polypeptide is Isoleucine--tRNA ligase (Chlamydia trachomatis serovar L2b (strain UCH-1/proctitis)).